The primary structure comprises 227 residues: MLHLVDYALLKPYLTLEEVVRGAQRAEELGVAAYCVNPVYVPYVRRVLRRVKLCAVVDFPFGAMPTAVRAALVERLADYVEELDIVAPIGLVKSHMWADVRRDLITVVGAAGGRVVKVIVEEPYLTDEERYRLYDIVAESGAHFIKSSTGFAEEGYAKQLGNPIYSTPERAAAIARYIRERGYKLGVKMAGGIRTAEQAKAIIDAIGFGIDPTRVRLGTSTPEVLKT.

Asp84 (proton donor/acceptor) is an active-site residue. The Schiff-base intermediate with acetaldehyde role is filled by Lys146. Lys188 acts as the Proton donor/acceptor in catalysis.

It belongs to the DeoC/FbaB aldolase family. DeoC type 1 subfamily.

It is found in the cytoplasm. The catalysed reaction is 2-deoxy-D-ribose 5-phosphate = D-glyceraldehyde 3-phosphate + acetaldehyde. It functions in the pathway carbohydrate degradation; 2-deoxy-D-ribose 1-phosphate degradation; D-glyceraldehyde 3-phosphate and acetaldehyde from 2-deoxy-alpha-D-ribose 1-phosphate: step 2/2. Catalyzes a reversible aldol reaction between acetaldehyde and D-glyceraldehyde 3-phosphate to generate 2-deoxy-D-ribose 5-phosphate. The polypeptide is Deoxyribose-phosphate aldolase (Pyrobaculum islandicum (strain DSM 4184 / JCM 9189 / GEO3)).